Reading from the N-terminus, the 613-residue chain is Autophagy-related protein 22-2 (613 aa).

Positions 1 to 30 (MAFNSTPPVSPGGEAQQRPPRFPGEDTTPT) are disordered. The chain crosses the membrane as a helical span at residues 41–61 (YGIAAEVFAVCGVGSFLPLTL). The N-linked (GlcNAc...) asparagine glycan is linked to N90. Transmembrane regions (helical) follow at residues 120–140 (SFAM…LISF), 167–187 (LFIF…VVGV), 189–209 (CLGS…ANDP), 278–298 (VGLG…MLFA), 307–327 (ISGT…WFSF), 382–402 (VIIF…VSGT), and 418–438 (VGLL…LWPV). Residue N448 is glycosylated (N-linked (GlcNAc...) asparagine). A run of 4 helical transmembrane segments spans residues 453 to 473 (LCIA…IPLF), 477 to 497 (GVVG…HGLV), 508 to 528 (FFGL…YAAT), and 553 to 573 (GFFF…MVNA). Positions 592-613 (REHASEYGGPSEEAEGLLARDI) are disordered.

Belongs to the ATG22 family.

The protein resides in the vacuole membrane. Vacuolar effluxer which mediate the efflux of amino acids resulting from autophagic degradation. The release of autophagic amino acids allows the maintenance of protein synthesis and viability during nitrogen starvation. The polypeptide is Autophagy-related protein 22-2 (atg22-2) (Aspergillus fumigatus (strain ATCC MYA-4609 / CBS 101355 / FGSC A1100 / Af293) (Neosartorya fumigata)).